The primary structure comprises 192 residues: Peptidyl-tRNA hydrolase (192 aa).

Tyrosine 17 contributes to the tRNA binding site. The Proton acceptor role is filled by histidine 22. Residues phenylalanine 68, asparagine 70, and asparagine 116 each contribute to the tRNA site.

The protein belongs to the PTH family. In terms of assembly, monomer.

It is found in the cytoplasm. The enzyme catalyses an N-acyl-L-alpha-aminoacyl-tRNA + H2O = an N-acyl-L-amino acid + a tRNA + H(+). In terms of biological role, hydrolyzes ribosome-free peptidyl-tRNAs (with 1 or more amino acids incorporated), which drop off the ribosome during protein synthesis, or as a result of ribosome stalling. Catalyzes the release of premature peptidyl moieties from peptidyl-tRNA molecules trapped in stalled 50S ribosomal subunits, and thus maintains levels of free tRNAs and 50S ribosomes. The polypeptide is Peptidyl-tRNA hydrolase (Buchnera aphidicola subsp. Cinara cedri (strain Cc)).